Consider the following 342-residue polypeptide: Holliday junction branch migration complex subunit RuvB (342 aa).

The segment at 1–22 is disordered; sequence MTLKPVREVSPGSQEGEERLEQ. Residues 1–185 are large ATPase domain (RuvB-L); sequence MTLKPVREVS…FPIQERLGYY (185 aa). ATP-binding positions include L24, R25, G66, K69, T70, S71, 132–134, R175, Y185, and R222; that span reads EDY. T70 contributes to the Mg(2+) binding site. Residues 186–256 are small ATPAse domain (RuvB-S); that stretch reads EPTELREIAV…IVETTLERLE (71 aa). The head domain (RuvB-H) stretch occupies residues 259–342; the sequence is GRGLDAMDRR…RPQGKQGSLI (84 aa). Residues R295, R314, and R319 each coordinate DNA.

The protein belongs to the RuvB family. As to quaternary structure, homohexamer. Forms an RuvA(8)-RuvB(12)-Holliday junction (HJ) complex. HJ DNA is sandwiched between 2 RuvA tetramers; dsDNA enters through RuvA and exits via RuvB. An RuvB hexamer assembles on each DNA strand where it exits the tetramer. Each RuvB hexamer is contacted by two RuvA subunits (via domain III) on 2 adjacent RuvB subunits; this complex drives branch migration. In the full resolvosome a probable DNA-RuvA(4)-RuvB(12)-RuvC(2) complex forms which resolves the HJ.

It localises to the cytoplasm. It carries out the reaction ATP + H2O = ADP + phosphate + H(+). Functionally, the RuvA-RuvB-RuvC complex processes Holliday junction (HJ) DNA during genetic recombination and DNA repair, while the RuvA-RuvB complex plays an important role in the rescue of blocked DNA replication forks via replication fork reversal (RFR). RuvA specifically binds to HJ cruciform DNA, conferring on it an open structure. The RuvB hexamer acts as an ATP-dependent pump, pulling dsDNA into and through the RuvAB complex. RuvB forms 2 homohexamers on either side of HJ DNA bound by 1 or 2 RuvA tetramers; 4 subunits per hexamer contact DNA at a time. Coordinated motions by a converter formed by DNA-disengaged RuvB subunits stimulates ATP hydrolysis and nucleotide exchange. Immobilization of the converter enables RuvB to convert the ATP-contained energy into a lever motion, pulling 2 nucleotides of DNA out of the RuvA tetramer per ATP hydrolyzed, thus driving DNA branch migration. The RuvB motors rotate together with the DNA substrate, which together with the progressing nucleotide cycle form the mechanistic basis for DNA recombination by continuous HJ branch migration. Branch migration allows RuvC to scan DNA until it finds its consensus sequence, where it cleaves and resolves cruciform DNA. In Anaeromyxobacter sp. (strain Fw109-5), this protein is Holliday junction branch migration complex subunit RuvB.